A 997-amino-acid chain; its full sequence is Glutamate [NMDA] receptor subunit 1 (997 aa).

Positions 1–26 (MAVAGFVFCRPLFGLAIVLLVAPIDA) are cleaved as a signal peptide. Over 27–573 (AQRHTASDNP…TLVSFLQPFS (547 aa)) the chain is Extracellular. N-linked (GlcNAc...) asparagine glycans are attached at residues asparagine 258, asparagine 314, asparagine 345, asparagine 397, asparagine 454, asparagine 481, and asparagine 501. Residues 530-532 (PLT) and arginine 537 each bind glycine. Residues 574 to 594 (NTLWILVMVSVHVVALVLYLL) form a helical membrane-spanning segment. The Cytoplasmic portion of the chain corresponds to 595 to 651 (DRFSPFGRFKLSHSDSNEEKALNLSSAVWFAWGVLLNSGIGEGTPRSFSARVLGMVW). The chain crosses the membrane as a helical span at residues 652–672 (AGFAMIIVASYTANLAAFLVL). Topologically, residues 673-831 (ERPKTKLSGI…KTPNTLGLKN (159 aa)) are extracellular. N-linked (GlcNAc...) asparagine glycosylation occurs at asparagine 693. The glycine site is built by serine 703 and aspartate 747. A helical transmembrane segment spans residues 832 to 852 (MAGVFILVGVGIAGGVGLIII). Residues 853-997 (EVIYKKHQVK…YTSDVSHLVV (145 aa)) lie on the Cytoplasmic side of the membrane. The tract at residues 970–997 (LGKTRPQQSVLPPRYSPGYTSDVSHLVV) is disordered. A compositionally biased stretch (polar residues) spans 987–997 (GYTSDVSHLVV).

Belongs to the glutamate-gated ion channel (TC 1.A.10.1) family. As to quaternary structure, forms a heteromeric NMDA channel with Nmdar2.

The protein resides in the cell membrane. The protein localises to the postsynaptic cell membrane. Its subcellular location is the postsynaptic density. Functionally, NMDA receptor subtype of glutamate-gated ion channels with high calcium permeability and voltage-dependent sensitivity to magnesium. Mediated by glycine. This protein plays a key role in synaptic plasticity, synaptogenesis, excitotoxicity, memory acquisition and learning. It mediates neuronal functions in glutamate neurotransmission. Is involved in the cell surface targeting of NMDA receptors. Plays a role in associative learning and in long-term memory consolidation. The protein is Glutamate [NMDA] receptor subunit 1 of Drosophila sechellia (Fruit fly).